We begin with the raw amino-acid sequence, 310 residues long: Putative HTH-type transcriptional regulatory protein M1425_1284 (310 aa).

Positions 125 to 180 constitute an HTH cro/C1-type domain; the sequence is LKHKREEMGYSIGDVAKFLGVSRKAIYDYEKGDSDVSLEVAEKLIDLFGDDIIGDV. Residues 136 to 155 constitute a DNA-binding region (H-T-H motif); that stretch reads IGDVAKFLGVSRKAIYDYEK.

The protein is Putative HTH-type transcriptional regulatory protein M1425_1284 of Saccharolobus islandicus (strain M.14.25 / Kamchatka #1) (Sulfolobus islandicus).